Consider the following 864-residue polypeptide: uncharacterized protein (864 aa).

This is an uncharacterized protein from Rickettsia typhi (strain ATCC VR-144 / Wilmington).